The chain runs to 338 residues: Ketol-acid reductoisomerase (NADP(+)) (338 aa).

One can recognise a KARI N-terminal Rossmann domain in the interval 1-181; it reads MKVFYDKDAD…GGGRAGIIET (181 aa). NADP(+)-binding positions include 24-27, Arg47, and Ser52; that span reads YGSQ. His107 is a catalytic residue. Gly133 is a binding site for NADP(+). Residues 182 to 327 form the KARI C-terminal knotted domain; that stretch reads NFREETETDL…SKLRAMMPWI (146 aa). Asp190, Glu194, Glu226, and Glu230 together coordinate Mg(2+). Ser251 provides a ligand contact to substrate.

Belongs to the ketol-acid reductoisomerase family. Mg(2+) serves as cofactor.

The enzyme catalyses (2R)-2,3-dihydroxy-3-methylbutanoate + NADP(+) = (2S)-2-acetolactate + NADPH + H(+). It carries out the reaction (2R,3R)-2,3-dihydroxy-3-methylpentanoate + NADP(+) = (S)-2-ethyl-2-hydroxy-3-oxobutanoate + NADPH + H(+). Its pathway is amino-acid biosynthesis; L-isoleucine biosynthesis; L-isoleucine from 2-oxobutanoate: step 2/4. It functions in the pathway amino-acid biosynthesis; L-valine biosynthesis; L-valine from pyruvate: step 2/4. Functionally, involved in the biosynthesis of branched-chain amino acids (BCAA). Catalyzes an alkyl-migration followed by a ketol-acid reduction of (S)-2-acetolactate (S2AL) to yield (R)-2,3-dihydroxy-isovalerate. In the isomerase reaction, S2AL is rearranged via a Mg-dependent methyl migration to produce 3-hydroxy-3-methyl-2-ketobutyrate (HMKB). In the reductase reaction, this 2-ketoacid undergoes a metal-dependent reduction by NADPH to yield (R)-2,3-dihydroxy-isovalerate. The chain is Ketol-acid reductoisomerase (NADP(+)) from Burkholderia mallei (strain NCTC 10229).